We begin with the raw amino-acid sequence, 102 residues long: Small ribosomal subunit protein uS10 (102 aa).

Belongs to the universal ribosomal protein uS10 family. Part of the 30S ribosomal subunit.

Involved in the binding of tRNA to the ribosomes. The chain is Small ribosomal subunit protein uS10 from Chelativorans sp. (strain BNC1).